A 548-amino-acid polypeptide reads, in one-letter code: Probable malate:quinone oxidoreductase (548 aa).

Residues 521 to 548 form a disordered region; sequence DKPQAADSTPKPQLKPQPVQKEVADIAL. Over residues 530–541 the composition is skewed to low complexity; sequence PKPQLKPQPVQK.

It belongs to the MQO family. FAD serves as cofactor.

The enzyme catalyses (S)-malate + a quinone = a quinol + oxaloacetate. Its pathway is carbohydrate metabolism; tricarboxylic acid cycle; oxaloacetate from (S)-malate (quinone route): step 1/1. The chain is Probable malate:quinone oxidoreductase from Escherichia coli O139:H28 (strain E24377A / ETEC).